Reading from the N-terminus, the 262-residue chain is MIDKSAFIHPTAIVEDGAVIGANVHIGPFCIVGPQVEIGEGTVLKSHVVVNGQTKIGRDNEIYQFASIGEVNQDLKYAGEPTRVEIGDRNRIRESVTIHRGTVQGGGLTKVGSDNLLMINAHVAHDCTVGNRCILANNATLAGHVSVDDFAIIGGMTAVHQFCIIGAHVMVGGCSGVAQDVPPYVIAQGNHATPFGVNIEGLKRRGFSREGLVAIRNAYKLLYRSGKTLDEAKLEIAELAEKHPEVKAFTEFFERSTRGPIR.

This sequence belongs to the transferase hexapeptide repeat family. LpxA subfamily. In terms of assembly, homotrimer.

Its subcellular location is the cytoplasm. It catalyses the reaction a (3R)-hydroxyacyl-[ACP] + UDP-N-acetyl-alpha-D-glucosamine = a UDP-3-O-[(3R)-3-hydroxyacyl]-N-acetyl-alpha-D-glucosamine + holo-[ACP]. It functions in the pathway glycolipid biosynthesis; lipid IV(A) biosynthesis; lipid IV(A) from (3R)-3-hydroxytetradecanoyl-[acyl-carrier-protein] and UDP-N-acetyl-alpha-D-glucosamine: step 1/6. Involved in the biosynthesis of lipid A, a phosphorylated glycolipid that anchors the lipopolysaccharide to the outer membrane of the cell. The polypeptide is Acyl-[acyl-carrier-protein]--UDP-N-acetylglucosamine O-acyltransferase (Salmonella schwarzengrund (strain CVM19633)).